Here is a 204-residue protein sequence, read N- to C-terminus: Large ribosomal subunit protein eL15 (204 aa).

Belongs to the eukaryotic ribosomal protein eL15 family. As to quaternary structure, component of the large ribosomal subunit.

The protein localises to the cytoplasm. Functionally, component of the large ribosomal subunit. The ribosome is a large ribonucleoprotein complex responsible for the synthesis of proteins in the cell. The sequence is that of Large ribosomal subunit protein eL15 (rpl15) from Siniperca knerii (Big-eye mandarin fish).